The chain runs to 426 residues: Glutamate-1-semialdehyde 2,1-aminomutase (426 aa).

K265 bears the N6-(pyridoxal phosphate)lysine mark.

It belongs to the class-III pyridoxal-phosphate-dependent aminotransferase family. HemL subfamily. As to quaternary structure, homodimer. The cofactor is pyridoxal 5'-phosphate.

The protein localises to the cytoplasm. The catalysed reaction is (S)-4-amino-5-oxopentanoate = 5-aminolevulinate. It participates in porphyrin-containing compound metabolism; protoporphyrin-IX biosynthesis; 5-aminolevulinate from L-glutamyl-tRNA(Glu): step 2/2. The chain is Glutamate-1-semialdehyde 2,1-aminomutase from Salmonella gallinarum (strain 287/91 / NCTC 13346).